A 285-amino-acid chain; its full sequence is 2-dehydro-3-deoxyphosphooctonate aldolase (285 aa).

It belongs to the KdsA family.

The protein resides in the cytoplasm. It carries out the reaction D-arabinose 5-phosphate + phosphoenolpyruvate + H2O = 3-deoxy-alpha-D-manno-2-octulosonate-8-phosphate + phosphate. Its pathway is carbohydrate biosynthesis; 3-deoxy-D-manno-octulosonate biosynthesis; 3-deoxy-D-manno-octulosonate from D-ribulose 5-phosphate: step 2/3. It participates in bacterial outer membrane biogenesis; lipopolysaccharide biosynthesis. The polypeptide is 2-dehydro-3-deoxyphosphooctonate aldolase (Leptothrix cholodnii (strain ATCC 51168 / LMG 8142 / SP-6) (Leptothrix discophora (strain SP-6))).